Here is an 805-residue protein sequence, read N- to C-terminus: Ubiquitin carboxyl-terminal hydrolase 10-B (805 aa).

Disordered stretches follow at residues 136-173 (AIPD…YLEG) and 284-305 (DTTE…EDTV). Polar residues-rich tracts occupy residues 143–153 (NADSDGTSGTG) and 284–298 (DTTE…QTLE). A USP domain is found at 422 to 802 (RGLINKGNWC…TAYLLYYRRV (381 aa)). The active-site Nucleophile is Cys431. The tract at residues 573–600 (EEVNKEEQEGSDEEWEQVGPRNKSSVTR) is disordered. His756 acts as the Proton acceptor in catalysis.

It belongs to the peptidase C19 family. USP10 subfamily.

The protein localises to the cytoplasm. The protein resides in the nucleus. The catalysed reaction is Thiol-dependent hydrolysis of ester, thioester, amide, peptide and isopeptide bonds formed by the C-terminal Gly of ubiquitin (a 76-residue protein attached to proteins as an intracellular targeting signal).. In terms of biological role, hydrolase that can remove conjugated ubiquitin from target proteins such as p53/tp53, rps2/us5, rps3/us3, rps10/eS10, becn1, snx3 and cftr. Acts as an essential regulator of p53/tp53 stability: in unstressed cells, specifically deubiquitinates p53/tp53 in the cytoplasm, leading to counteracts MDM2 action and stabilize p53/tp53. Following DNA damage, translocates to the nucleus and deubiquitinates p53/tp53, leading to regulate the p53/TP53-dependent DNA damage response. Component of a regulatory loop that controls autophagy and p53/tp53 levels. Plays a key role in 40S ribosome subunit recycling when a ribosome has stalled during translation: acts both by inhibiting formation of stress granules, which store stalled translation pre-initiation complexes, and mediating deubiquitination of 40S ribosome subunits. Deubiquitinates cftr in early endosomes, enhancing its endocytic recycling. The sequence is that of Ubiquitin carboxyl-terminal hydrolase 10-B (usp10-b) from Xenopus laevis (African clawed frog).